Here is a 236-residue protein sequence, read N- to C-terminus: H2HPP isomerase (236 aa).

2 consecutive Cupin type-2 domains span residues 40–106 (YVPP…AIDI) and 151–215 (NIPG…SKSV). The a divalent metal cation site is built by H50, H52, Q56, H91, H162, H164, Q168, and H202. Y223 is a substrate binding site.

In terms of assembly, monomer. The cofactor is Fe(2+). Co(2+) serves as cofactor.

The protein resides in the cytoplasm. The catalysed reaction is 3-[(4R)-4-hydroxycyclohexa-1,5-dien-1-yl]-2-oxopropanoate = 3-[(1E,4R)-4-hydroxycyclohex-2-en-1-ylidene]pyruvate. The protein operates within antibiotic biosynthesis; bacilysin biosynthesis. In terms of biological role, part of the bacABCDEF operon responsible for the biosynthesis of the nonribosomally synthesized dipeptide antibiotic bacilysin, composed of L-alanine and L-anticapsin. Bacilysin is an irreversible inactivator of the glutaminase domain of glucosamine synthetase. BacB catalyzes the allylic isomerization of the endocyclic-delta(4),delta(8)-7R-dihydro-hydroxyphenylpyruvate (en-H2HPP) to generate a mixture of 3E,7R- and 3Z, 7R-olefins of the exocyclic-delta(3),delta(5)-dihydro-hydroxyphenylpyruvate (ex-H2HPP). The sequence is that of H2HPP isomerase from Bacillus amyloliquefaciens (Bacillus velezensis).